Consider the following 586-residue polypeptide: MKQSVSAEQIELKSSLPGSKKVYVDGTREGMKVPMREIEQSDTNGVQNPPIRVYDTSGPYTDPEYKVELEKGLQAPRHSWTLGRGDVEAYEGREIKPEDDGVKVASKHTPVFPQMDRKPLRAKQGANVSQMHYARNGIITSEMEYVAIREGVEPEFVRKEIAEGRAILPANINHPEAEPMIIGRNFHVKVNANIGNSAVSSSIAEEVEKMTWATRWGADTIMDLSTGKNIHTTREWIIRNAPVPVGTVPIYQALEKVNGIAEDLTWEVYRDTLIEQAEQGVDYFTIHAGVLLRYIPITAKRMTGIVSRGGSIMAQWCLFHHKENFLYTHFEEICEIMKQYDVSFSLGDGLRPGSIADANDEAQFSELETLGELTKIAWKHDVQVMIEGPGHVPMHLIKENMEKELDICQGAPFYTLGPLTTDIAPGYDHITSAIGAAMIGWFGTAMLCYVTPKEHLGLPNKDDVREGVITYKIAAHAADLAKGHKTAHQRDDALSKARFEFRWRDQFNLSLDPERAMEYHDETLPAEGAKTAHFCSMCGPKFCSMRISHDIREYAKENDLETTEAIEKGMKEKAVEFKETGSHLYQ.

The disordered stretch occupies residues 1–58 (MKQSVSAEQIELKSSLPGSKKVYVDGTREGMKVPMREIEQSDTNGVQNPPIRVYDTSG). Basic and acidic residues predominate over residues 22–39 (VYVDGTREGMKVPMREIE). Residues asparagine 193, methionine 222, tyrosine 251, histidine 287, 307 to 309 (SRG), 348 to 351 (DGLR), and glutamate 387 contribute to the substrate site. Residue histidine 391 participates in Zn(2+) binding. Tyrosine 414 contacts substrate. Residue histidine 455 coordinates Zn(2+). [4Fe-4S] cluster is bound by residues cysteine 535, cysteine 538, and cysteine 543.

Belongs to the ThiC family. [4Fe-4S] cluster is required as a cofactor.

The catalysed reaction is 5-amino-1-(5-phospho-beta-D-ribosyl)imidazole + S-adenosyl-L-methionine = 4-amino-2-methyl-5-(phosphooxymethyl)pyrimidine + CO + 5'-deoxyadenosine + formate + L-methionine + 3 H(+). Its pathway is cofactor biosynthesis; thiamine diphosphate biosynthesis. Its function is as follows. Catalyzes the synthesis of the hydroxymethylpyrimidine phosphate (HMP-P) moiety of thiamine from aminoimidazole ribotide (AIR) in a radical S-adenosyl-L-methionine (SAM)-dependent reaction. This chain is Phosphomethylpyrimidine synthase, found in Bacillus mycoides (strain KBAB4) (Bacillus weihenstephanensis).